The chain runs to 120 residues: Galanin-like peptide (120 aa).

Residues 1–22 (MALTVPLIVLAVLLSLMESPAS) form the signal peptide. Residues 85–120 (SLGETFAKPDSGVTFVGVPDVVPWKRIRPGTTRFQI) constitute a propeptide that is removed on maturation.

Belongs to the galanin family.

The protein localises to the secreted. Hypothalamic neuropeptide which binds to the G-protein-coupled galanin receptors (GALR1, GALR2 and GALR3). Involved in a large number of putative physiological functions in CNS homeostatic processes, including the regulation of gonadotropin-releasing hormone secretion. The chain is Galanin-like peptide (GALP) from Sus scrofa (Pig).